A 453-amino-acid chain; its full sequence is MGSIQTSKDQIHVIIGSTHRFSHLEKAKVIGAHLIKRGYRVTILAGPSVRDEVESIGALFAPMQGRAGGSPIKPAYNQPPPPWAEEMEVSALKNFFIGPIPDEYKSVQDVLKTLRETEGEETKVVYMDDIICGAMLPVYFGAPGAIRPKGVIKIGTTPLPHESAGTPTWTLGIPSPSTDSGSVGDLWGTKKEIYTSDDIQGHFENVLREMGIPADNLKPGSLPRFMHSQGTCCDAYLSLSIPEFEFPRSDAPESIQFVGALPTVGSVPSNLPEWWDEVIHAQGPAKKPIVVVSQGAVNNDPTDLILPTIEALKDEDVAVIATLVRGPKIEVDLPSNVKLAEFIPFDILLRHTDVLVSNGGFGTVQMALSLGVPMVLAGVYLDKYYTNSRAASMGAAINLGCERVEPSVVKTAVCDILSDQKRKERCLQIKEKYAEYNALDKIVDYVDALASKP.

Belongs to the UDP-glycosyltransferase family.

The protein operates within secondary metabolite biosynthesis. Functionally, UDP-glucosyltransferase; part of the cluster that mediates the biosynthesis of a highly modified cyclo-arginine-tryptophan dipeptide (cRW). The first step of the pathway is perfornmed by the arginine-containing cyclodipeptide synthase (RCPDS) avaA that acts as the scaffold-generating enzyme and is responsible for formation of the cyclo-Arg-Trp (cRW) diketopiperazine. AvaB then acts as a multifunctional flavoenzyme that is responsible for generating the cyclo-Arg-formylkynurenine DKP, which can be deformylated by avaC. AvaB then further catalyzes an additional N-oxidation followed by cyclization and dehydration. The next step is an N-acetylation of the guanidine group catalyzed by the arginine N-acetyltransferase avaD. The roles of the additional enzymes identified within the ava cluster still have to be determined. This is UDP-glucosyltransferase avaP from Aspergillus versicolor.